We begin with the raw amino-acid sequence, 342 residues long: Holliday junction branch migration complex subunit RuvB (342 aa).

The tract at residues 2–181 (TDNPLLSSAS…FGIPVRLQFY (180 aa)) is large ATPase domain (RuvB-L). ATP contacts are provided by leucine 20, arginine 21, glycine 62, lysine 65, threonine 66, threonine 67, arginine 171, tyrosine 181, and arginine 218. Position 66 (threonine 66) interacts with Mg(2+). The interval 182 to 252 (SVEELERVVA…IADNALTRLE (71 aa)) is small ATPAse domain (RuvB-S). The head domain (RuvB-H) stretch occupies residues 255–342 (KIGLDLQDRR…QMPGLFGPDE (88 aa)). Residues arginine 291, arginine 310, and arginine 315 each coordinate DNA.

Belongs to the RuvB family. In terms of assembly, homohexamer. Forms an RuvA(8)-RuvB(12)-Holliday junction (HJ) complex. HJ DNA is sandwiched between 2 RuvA tetramers; dsDNA enters through RuvA and exits via RuvB. An RuvB hexamer assembles on each DNA strand where it exits the tetramer. Each RuvB hexamer is contacted by two RuvA subunits (via domain III) on 2 adjacent RuvB subunits; this complex drives branch migration. In the full resolvosome a probable DNA-RuvA(4)-RuvB(12)-RuvC(2) complex forms which resolves the HJ.

It is found in the cytoplasm. It carries out the reaction ATP + H2O = ADP + phosphate + H(+). In terms of biological role, the RuvA-RuvB-RuvC complex processes Holliday junction (HJ) DNA during genetic recombination and DNA repair, while the RuvA-RuvB complex plays an important role in the rescue of blocked DNA replication forks via replication fork reversal (RFR). RuvA specifically binds to HJ cruciform DNA, conferring on it an open structure. The RuvB hexamer acts as an ATP-dependent pump, pulling dsDNA into and through the RuvAB complex. RuvB forms 2 homohexamers on either side of HJ DNA bound by 1 or 2 RuvA tetramers; 4 subunits per hexamer contact DNA at a time. Coordinated motions by a converter formed by DNA-disengaged RuvB subunits stimulates ATP hydrolysis and nucleotide exchange. Immobilization of the converter enables RuvB to convert the ATP-contained energy into a lever motion, pulling 2 nucleotides of DNA out of the RuvA tetramer per ATP hydrolyzed, thus driving DNA branch migration. The RuvB motors rotate together with the DNA substrate, which together with the progressing nucleotide cycle form the mechanistic basis for DNA recombination by continuous HJ branch migration. Branch migration allows RuvC to scan DNA until it finds its consensus sequence, where it cleaves and resolves cruciform DNA. This Novosphingobium aromaticivorans (strain ATCC 700278 / DSM 12444 / CCUG 56034 / CIP 105152 / NBRC 16084 / F199) protein is Holliday junction branch migration complex subunit RuvB.